A 900-amino-acid chain; its full sequence is Alanine--tRNA ligase (900 aa).

Residues histidine 568, histidine 572, cysteine 672, and histidine 676 each coordinate Zn(2+).

The protein belongs to the class-II aminoacyl-tRNA synthetase family. The cofactor is Zn(2+).

It localises to the cytoplasm. It catalyses the reaction tRNA(Ala) + L-alanine + ATP = L-alanyl-tRNA(Ala) + AMP + diphosphate. In terms of biological role, catalyzes the attachment of alanine to tRNA(Ala) in a two-step reaction: alanine is first activated by ATP to form Ala-AMP and then transferred to the acceptor end of tRNA(Ala). Also edits incorrectly charged Ser-tRNA(Ala) and Gly-tRNA(Ala) via its editing domain. This chain is Alanine--tRNA ligase, found in Mycoplasma genitalium (strain ATCC 33530 / DSM 19775 / NCTC 10195 / G37) (Mycoplasmoides genitalium).